A 274-amino-acid chain; its full sequence is Diaminopimelate epimerase (274 aa).

Asn11, Gln44, and Asn64 together coordinate substrate. The Proton donor role is filled by Cys73. Residues 74 to 75 (GN), Asn157, Asn190, and 208 to 209 (ER) each bind substrate. Catalysis depends on Cys217, which acts as the Proton acceptor. 218-219 (GS) serves as a coordination point for substrate.

It belongs to the diaminopimelate epimerase family. As to quaternary structure, homodimer.

It localises to the cytoplasm. It carries out the reaction (2S,6S)-2,6-diaminopimelate = meso-2,6-diaminopimelate. It functions in the pathway amino-acid biosynthesis; L-lysine biosynthesis via DAP pathway; DL-2,6-diaminopimelate from LL-2,6-diaminopimelate: step 1/1. In terms of biological role, catalyzes the stereoinversion of LL-2,6-diaminopimelate (L,L-DAP) to meso-diaminopimelate (meso-DAP), a precursor of L-lysine and an essential component of the bacterial peptidoglycan. The sequence is that of Diaminopimelate epimerase from Salmonella agona (strain SL483).